The primary structure comprises 123 residues: Ig heavy chain V region HPCG14 (123 aa).

Residues 1-114 enclose the Ig-like domain; sequence EVKLVESGGG…GYDYWFDVWG (114 aa).

The protein is Ig heavy chain V region HPCG14 of Mus musculus (Mouse).